Consider the following 391-residue polypeptide: Chorismate synthase (391 aa).

NADP(+) is bound at residue Arg48. Residues 126–128, Gly286, 301–305, and Arg328 contribute to the FMN site; these read RAS and KPTSS.

The protein belongs to the chorismate synthase family. FMNH2 serves as cofactor.

The catalysed reaction is 5-O-(1-carboxyvinyl)-3-phosphoshikimate = chorismate + phosphate. The protein operates within metabolic intermediate biosynthesis; chorismate biosynthesis; chorismate from D-erythrose 4-phosphate and phosphoenolpyruvate: step 7/7. In terms of biological role, catalyzes the anti-1,4-elimination of the C-3 phosphate and the C-6 proR hydrogen from 5-enolpyruvylshikimate-3-phosphate (EPSP) to yield chorismate, which is the branch point compound that serves as the starting substrate for the three terminal pathways of aromatic amino acid biosynthesis. This reaction introduces a second double bond into the aromatic ring system. The protein is Chorismate synthase of Saccharolobus islandicus (strain M.16.27) (Sulfolobus islandicus).